The primary structure comprises 222 residues: UPF0488 protein C8orf33 homolog (222 aa).

Residues 1–16 (MAEPGRPAREAPAASS) show a composition bias toward low complexity. Disordered regions lie at residues 1–103 (MAEP…AEQL), 119–146 (KTQR…TPLP), and 186–210 (VSEA…KTTP). An N-acetylalanine modification is found at A2. A compositionally biased stretch (basic residues) spans 17-28 (RKTHRAPRRPRP). Residue R27 is modified to Omega-N-methylarginine. Over residues 29–39 (SRSASGASEPP) the composition is skewed to low complexity. Position 75 is a phosphoserine (S75). Positions 93–103 (PPSAEAQAEQL) are enriched in low complexity.

Belongs to the UPF0488 family.

This chain is UPF0488 protein C8orf33 homolog, found in Mus musculus (Mouse).